We begin with the raw amino-acid sequence, 349 residues long: Anthranilate phosphoribosyltransferase (349 aa).

5-phospho-alpha-D-ribose 1-diphosphate is bound by residues G82, G85–D86, N92–T95, K110–G118, and S122. G82 is a binding site for anthranilate. Residue S94 participates in Mg(2+) binding. N113 contacts anthranilate. R168 contacts anthranilate. Mg(2+)-binding residues include D227 and E228.

The protein belongs to the anthranilate phosphoribosyltransferase family. In terms of assembly, homodimer. Requires Mg(2+) as cofactor.

It carries out the reaction N-(5-phospho-beta-D-ribosyl)anthranilate + diphosphate = 5-phospho-alpha-D-ribose 1-diphosphate + anthranilate. It participates in amino-acid biosynthesis; L-tryptophan biosynthesis; L-tryptophan from chorismate: step 2/5. Catalyzes the transfer of the phosphoribosyl group of 5-phosphorylribose-1-pyrophosphate (PRPP) to anthranilate to yield N-(5'-phosphoribosyl)-anthranilate (PRA). This is Anthranilate phosphoribosyltransferase from Pseudomonas fluorescens (strain ATCC BAA-477 / NRRL B-23932 / Pf-5).